We begin with the raw amino-acid sequence, 98 residues long: Putative pterin-4-alpha-carbinolamine dehydratase (98 aa).

The protein belongs to the pterin-4-alpha-carbinolamine dehydratase family.

It catalyses the reaction (4aS,6R)-4a-hydroxy-L-erythro-5,6,7,8-tetrahydrobiopterin = (6R)-L-erythro-6,7-dihydrobiopterin + H2O. The chain is Putative pterin-4-alpha-carbinolamine dehydratase from Chelativorans sp. (strain BNC1).